A 515-amino-acid chain; its full sequence is 2-isopropylmalate synthase (515 aa).

Residues Ile4 to Lys266 enclose the Pyruvate carboxyltransferase domain. Residues Asp13, His201, His203, and Asn237 each contribute to the Mn(2+) site. A regulatory domain region spans residues Gln391–Ser515.

Belongs to the alpha-IPM synthase/homocitrate synthase family. LeuA type 1 subfamily. Homodimer. It depends on Mn(2+) as a cofactor.

It localises to the cytoplasm. The enzyme catalyses 3-methyl-2-oxobutanoate + acetyl-CoA + H2O = (2S)-2-isopropylmalate + CoA + H(+). Its pathway is amino-acid biosynthesis; L-leucine biosynthesis; L-leucine from 3-methyl-2-oxobutanoate: step 1/4. Functionally, catalyzes the condensation of the acetyl group of acetyl-CoA with 3-methyl-2-oxobutanoate (2-ketoisovalerate) to form 3-carboxy-3-hydroxy-4-methylpentanoate (2-isopropylmalate). The protein is 2-isopropylmalate synthase of Geobacillus stearothermophilus (Bacillus stearothermophilus).